We begin with the raw amino-acid sequence, 411 residues long: ATP phosphoribosyltransferase 1, chloroplastic (411 aa).

Residues 1–12 are compositionally biased toward polar residues; sequence MSLLLPTNLQQY. A disordered region spans residues 1–27; that stretch reads MSLLLPTNLQQYPSSSSFPSSTPILSP. The N-terminal 49 residues, 1 to 49, are a transit peptide targeting the chloroplast; it reads MSLLLPTNLQQYPSSSSFPSSTPILSPPPSTAFSVIVPRRRCLRLVTSC. Low complexity predominate over residues 13–24; it reads PSSSSFPSSTPI. At Val-50 the chain carries N-acetylvaline.

It belongs to the ATP phosphoribosyltransferase family. Long subfamily. It depends on Mg(2+) as a cofactor. In terms of tissue distribution, expressed in leaves and at lower levels in roots (at protein level).

The protein resides in the plastid. The protein localises to the chloroplast. The enzyme catalyses 1-(5-phospho-beta-D-ribosyl)-ATP + diphosphate = 5-phospho-alpha-D-ribose 1-diphosphate + ATP. Its pathway is amino-acid biosynthesis; L-histidine biosynthesis; L-histidine from 5-phospho-alpha-D-ribose 1-diphosphate: step 1/9. With respect to regulation, feedback inhibited by L-histidine. In terms of biological role, catalyzes the condensation of ATP and 5-phosphoribose 1-diphosphate to form N'-(5'-phosphoribosyl)-ATP (PR-ATP). In Arabidopsis thaliana (Mouse-ear cress), this protein is ATP phosphoribosyltransferase 1, chloroplastic (HISN1A).